The primary structure comprises 218 residues: N-(5'-phosphoribosyl)anthranilate isomerase (218 aa).

It belongs to the TrpF family.

It catalyses the reaction N-(5-phospho-beta-D-ribosyl)anthranilate = 1-(2-carboxyphenylamino)-1-deoxy-D-ribulose 5-phosphate. It participates in amino-acid biosynthesis; L-tryptophan biosynthesis; L-tryptophan from chorismate: step 3/5. The sequence is that of N-(5'-phosphoribosyl)anthranilate isomerase from Bordetella parapertussis (strain 12822 / ATCC BAA-587 / NCTC 13253).